Consider the following 201-residue polypeptide: Peptide deformylase (201 aa).

Positions 1-21 (MANHFSQLAKKSRTNGNAEKI) are disordered. Fe cation is bound by residues Cys-121 and His-163. Glu-164 is a catalytic residue. His-167 serves as a coordination point for Fe cation.

The protein belongs to the polypeptide deformylase family. Fe(2+) serves as cofactor.

It catalyses the reaction N-terminal N-formyl-L-methionyl-[peptide] + H2O = N-terminal L-methionyl-[peptide] + formate. Functionally, removes the formyl group from the N-terminal Met of newly synthesized proteins. Requires at least a dipeptide for an efficient rate of reaction. N-terminal L-methionine is a prerequisite for activity but the enzyme has broad specificity at other positions. The polypeptide is Peptide deformylase (Prochlorococcus marinus (strain AS9601)).